A 173-amino-acid polypeptide reads, in one-letter code: Ribosome maturation factor RimP (173 aa).

Belongs to the RimP family.

Its subcellular location is the cytoplasm. In terms of biological role, required for maturation of 30S ribosomal subunits. This Pelodictyon phaeoclathratiforme (strain DSM 5477 / BU-1) protein is Ribosome maturation factor RimP.